Here is a 307-residue protein sequence, read N- to C-terminus: Actin maturation protease (307 aa).

Residues 1–34 (MSLENDAAAPPPPPLPPPPPPQPPSLARSESSKK) are disordered. Residues 9–24 (APPPPPLPPPPPPQPP) show a composition bias toward pro residues. Positions 80 to 200 (SLIQDGPQCG…WAVASGILLG (121 aa)) are peptidase C39-like. Cys88 is a catalytic residue.

Belongs to the ACTMAP family.

The protein resides in the cytoplasm. The enzyme catalyses N-terminal N(alpha)-acetyl-L-methionyl-L-aspartyl-[protein] + H2O = N-terminal L-aspartyl-[protein] + N-acetyl-L-methionine. The catalysed reaction is N-terminal N(alpha)-acetyl-L-methionyl-L-glutamyl-[protein] + H2O = N-terminal L-glutamyl-[protein] + N-acetyl-L-methionine. It carries out the reaction N-terminal N(alpha)-acetyl-L-cysteinyl-L-aspartyl-[protein] + H2O = N-terminal L-aspartyl-[protein] + N-acetyl-L-cysteine. It catalyses the reaction N-terminal N(alpha)-acetyl-L-cysteinyl-L-glutamyl-[protein] + H2O = N-terminal L-glutamyl-[protein] + N-acetyl-L-cysteine. In terms of biological role, actin maturation protease that specifically mediates the cleavage of immature acetylated N-terminal actin, thereby contributing to actin maturation. Cleaves N-terminal acetylated methionine of immature cytoplasmic actin after translation. Cleaves N-terminal acetylated cysteine of muscle actin after canonical removal of N-terminal methionine. This chain is Actin maturation protease, found in Danio rerio (Zebrafish).